The sequence spans 161 residues: Small ribosomal subunit protein uS19 (161 aa).

Residues 1-19 (MARQKKYSGKGGARKKNKQ) are compositionally biased toward basic residues. The interval 1-26 (MARQKKYSGKGGARKKNKQKQSVAPR) is disordered.

This sequence belongs to the universal ribosomal protein uS19 family.

Protein S19 forms a complex with S13 that binds strongly to the 16S ribosomal RNA. This Methanococcus maripaludis (strain C6 / ATCC BAA-1332) protein is Small ribosomal subunit protein uS19.